Reading from the N-terminus, the 148-residue chain is MNIAKQQQAFLGIDYGKKRIGLAFASSPLLIPLPIGNVEARSSLTLTAQALVSIIKERAVTTVVFGNPLPMQKAYASSVQSEIQELAALIQEMTAIEVILWDERLSSAQAERMLKSDCGLNRKQRKNSSDSLAATLILSSFLDSRKLY.

Belongs to the YqgF nuclease family.

Its subcellular location is the cytoplasm. Could be a nuclease involved in processing of the 5'-end of pre-16S rRNA. This is Putative pre-16S rRNA nuclease from Chlamydia trachomatis serovar L2 (strain ATCC VR-902B / DSM 19102 / 434/Bu).